Here is a 699-residue protein sequence, read N- to C-terminus: Elongation factor G (699 aa).

A tr-type G domain is found at 8-288; that stretch reads EDYRNFGIMA…AVVDYLPSPV (281 aa). GTP contacts are provided by residues 17-24, 86-90, and 140-143; these read AHIDAGKT, DTPGH, and NKMD.

Belongs to the TRAFAC class translation factor GTPase superfamily. Classic translation factor GTPase family. EF-G/EF-2 subfamily.

It localises to the cytoplasm. In terms of biological role, catalyzes the GTP-dependent ribosomal translocation step during translation elongation. During this step, the ribosome changes from the pre-translocational (PRE) to the post-translocational (POST) state as the newly formed A-site-bound peptidyl-tRNA and P-site-bound deacylated tRNA move to the P and E sites, respectively. Catalyzes the coordinated movement of the two tRNA molecules, the mRNA and conformational changes in the ribosome. This Sinorhizobium medicae (strain WSM419) (Ensifer medicae) protein is Elongation factor G.